The following is a 290-amino-acid chain: Shikimate dehydrogenase (NADP(+)) (290 aa).

Shikimate-binding positions include 20–22 (SLS) and Thr-67. The active-site Proton acceptor is the Lys-71. The shikimate site is built by Asn-92 and Asp-107. Residues 130 to 134 (GAGGA) and Leu-227 each bind NADP(+). Position 229 (Tyr-229) interacts with shikimate. Gly-250 is a binding site for NADP(+).

The protein belongs to the shikimate dehydrogenase family. In terms of assembly, homodimer.

The catalysed reaction is shikimate + NADP(+) = 3-dehydroshikimate + NADPH + H(+). The protein operates within metabolic intermediate biosynthesis; chorismate biosynthesis; chorismate from D-erythrose 4-phosphate and phosphoenolpyruvate: step 4/7. Its function is as follows. Involved in the biosynthesis of the chorismate, which leads to the biosynthesis of aromatic amino acids. Catalyzes the reversible NADPH linked reduction of 3-dehydroshikimate (DHSA) to yield shikimate (SA). In Syntrophomonas wolfei subsp. wolfei (strain DSM 2245B / Goettingen), this protein is Shikimate dehydrogenase (NADP(+)).